The primary structure comprises 507 residues: Maturase K (507 aa).

This sequence belongs to the intron maturase 2 family. MatK subfamily.

The protein resides in the plastid. Its subcellular location is the chloroplast. In terms of biological role, usually encoded in the trnK tRNA gene intron. Probably assists in splicing its own and other chloroplast group II introns. This Umbellularia californica (California bay laurel) protein is Maturase K.